A 66-amino-acid chain; its full sequence is Large ribosomal subunit protein bL35 (66 aa).

The protein belongs to the bacterial ribosomal protein bL35 family.

In Brucella melitensis biotype 1 (strain ATCC 23456 / CCUG 17765 / NCTC 10094 / 16M), this protein is Large ribosomal subunit protein bL35.